An 80-amino-acid polypeptide reads, in one-letter code: D-alanyl carrier protein 1 (80 aa).

The 80-residue stretch at 1 to 80 folds into the Carrier domain; sequence MTMDDTKATV…KIVAKVENLQ (80 aa). The residue at position 38 (Ser38) is an O-(pantetheine 4'-phosphoryl)serine.

The protein belongs to the DltC family. Post-translationally, 4'-phosphopantetheine is transferred from CoA to a specific serine of apo-DCP.

It localises to the cytoplasm. The protein operates within cell wall biogenesis; lipoteichoic acid biosynthesis. Its function is as follows. Carrier protein involved in the D-alanylation of lipoteichoic acid (LTA). The loading of thioester-linked D-alanine onto DltC is catalyzed by D-alanine--D-alanyl carrier protein ligase DltA. The DltC-carried D-alanyl group is further transferred to cell membrane phosphatidylglycerol (PG) by forming an ester bond, probably catalyzed by DltD. D-alanylation of LTA plays an important role in modulating the properties of the cell wall in Gram-positive bacteria, influencing the net charge of the cell wall. The sequence is that of D-alanyl carrier protein 1 from Lactiplantibacillus plantarum (strain ATCC BAA-793 / NCIMB 8826 / WCFS1) (Lactobacillus plantarum).